The following is a 433-amino-acid chain: Aspartate--tRNA(Asp/Asn) ligase (433 aa).

E167 lines the L-aspartate pocket. An aspartate region spans residues 189–192 (QLFK). R211 contacts L-aspartate. Residues 211 to 213 (RAE), 219 to 221 (RHL), and E356 each bind ATP. Residues E356 and S359 each coordinate Mg(2+). Residues S359 and R363 each coordinate L-aspartate. 404 to 407 (GGER) lines the ATP pocket.

Belongs to the class-II aminoacyl-tRNA synthetase family. Type 2 subfamily. Homodimer. Requires Mg(2+) as cofactor.

The protein resides in the cytoplasm. It carries out the reaction tRNA(Asx) + L-aspartate + ATP = L-aspartyl-tRNA(Asx) + AMP + diphosphate. In terms of biological role, aspartyl-tRNA synthetase with relaxed tRNA specificity since it is able to aspartylate not only its cognate tRNA(Asp) but also tRNA(Asn). Reaction proceeds in two steps: L-aspartate is first activated by ATP to form Asp-AMP and then transferred to the acceptor end of tRNA(Asp/Asn). The protein is Aspartate--tRNA(Asp/Asn) ligase of Haloferax volcanii (Halobacterium volcanii).